A 219-amino-acid polypeptide reads, in one-letter code: Tegument protein UL14 (219 aa).

The interval 159 to 219 is disordered; sequence VHTDAPSRPG…GFARDCPDGE (61 aa). The segment covering 186 to 202 has biased composition (pro residues); it reads APPPETAPSPEPAPGPA.

Belongs to the alphaherpesvirinae HHV-1 UL14 protein family. Post-translationally, phosphorylated.

The protein resides in the virion tegument. It is found in the host cytoplasm. It localises to the host nucleus. Contributes to the nuclear transport of the viral transcriptional activator VP16 during the early phase of infection. Therefore, participates indirectly in the regulation of the immediate-early gene expression. Additionally, seems to be important for efficient nuclear targeting of capsids. This Human herpesvirus 2 (strain HG52) (HHV-2) protein is Tegument protein UL14.